The chain runs to 670 residues: Extracellular matrix protein 2 (670 aa).

The signal sequence occupies residues 1–19 (MKLAVLFCFILLIVLQTDC). In terms of domain architecture, VWFC spans 96–153 (GYCFVKGMIMYNKAVWSPEPCTTCLCSNGRVLCDETECHPKACPYTIKPEGECCPICS). Residues 185-270 (SEEDEEIAEG…EEDAIRGDVF (86 aa)) form a disordered region. The span at 192-227 (AEGHKEHKKETSVPTKIHGDGERTERKLRPEKEGRS) shows a compositional bias: basic and acidic residues. Acidic residues predominate over residues 241-263 (ESKEETEREGEEEEEEEEEEEED). Positions 266 to 268 (RGD) match the Cell attachment site motif. The region spanning 278–315 (PGTPRGRPRLPRSCSLSYRTISCVHADFTEIPPITAPE) is the LRRNT domain. 13 LRR repeats span residues 339-359 (NLER…GPKA), 365-386 (KLMR…LPST), 387-407 (LEEL…SLSD), 410-430 (QLVT…DPLA), 436-456 (SLSY…GLPA), 457-478 (STEE…CFNH), 481-501 (KITM…APLA), 507-528 (NLES…LPKS), 529-549 (LLHL…VFGH), 553-573 (GLEY…DLVS), 580-601 (SLRE…IQDM), 603-624 (ALHF…QICN), and 632-655 (ALEH…AFSC). Asn349 carries an N-linked (GlcNAc...) asparagine glycan. Asn420 carries an N-linked (GlcNAc...) asparagine glycan. A glycan (N-linked (GlcNAc...) asparagine) is linked at Asn477.

This sequence belongs to the small leucine-rich proteoglycan (SLRP) family. SLRP class I subfamily. As to quaternary structure, interacts with numerous extracellular matrix proteins. Interacts with isoform 1 of MSL1. Interacts with isoform 3 of RASSF1.

Its subcellular location is the secreted. It is found in the extracellular space. It localises to the extracellular matrix. Its function is as follows. Promotes matrix assembly and cell adhesiveness. The sequence is that of Extracellular matrix protein 2 (Ecm2) from Mus musculus (Mouse).